A 212-amino-acid chain; its full sequence is Octanoyltransferase (212 aa).

The 179-residue stretch at 31 to 209 (AETQDEIWLV…HFADLLGYNI (179 aa)) folds into the BPL/LPL catalytic domain. Residues 70–77 (RGGQITYH), 138–140 (SLG), and 151–153 (GLA) contribute to the substrate site. The active-site Acyl-thioester intermediate is the Cys-169.

Belongs to the LipB family.

The protein resides in the cytoplasm. The catalysed reaction is octanoyl-[ACP] + L-lysyl-[protein] = N(6)-octanoyl-L-lysyl-[protein] + holo-[ACP] + H(+). It participates in protein modification; protein lipoylation via endogenous pathway; protein N(6)-(lipoyl)lysine from octanoyl-[acyl-carrier-protein]: step 1/2. Catalyzes the transfer of endogenously produced octanoic acid from octanoyl-acyl-carrier-protein onto the lipoyl domains of lipoate-dependent enzymes. Lipoyl-ACP can also act as a substrate although octanoyl-ACP is likely to be the physiological substrate. This chain is Octanoyltransferase, found in Haemophilus influenzae (strain PittGG).